Reading from the N-terminus, the 311-residue chain is Protoheme IX farnesyltransferase (311 aa).

The next 9 membrane-spanning stretches (helical) occupy residues 38-58 (IKVV…APDM), 62-82 (YFVQ…AAVI), 113-133 (LIFS…AANW), 134-154 (LTAQ…TMFL), 162-182 (IVIG…SETG), 188-208 (PWIL…ALAI), 230-250 (FTKT…FLPF), 251-271 (LIHM…IIFI), and 286-306 (ALNL…ALFA).

It belongs to the UbiA prenyltransferase family. Protoheme IX farnesyltransferase subfamily.

Its subcellular location is the cell inner membrane. It carries out the reaction heme b + (2E,6E)-farnesyl diphosphate + H2O = Fe(II)-heme o + diphosphate. Its pathway is porphyrin-containing compound metabolism; heme O biosynthesis; heme O from protoheme: step 1/1. In terms of biological role, converts heme B (protoheme IX) to heme O by substitution of the vinyl group on carbon 2 of heme B porphyrin ring with a hydroxyethyl farnesyl side group. In Psychromonas ingrahamii (strain DSM 17664 / CCUG 51855 / 37), this protein is Protoheme IX farnesyltransferase.